The sequence spans 841 residues: Protein NLP6 (841 aa).

Positions 539 to 624 (EAKTVKKSER…IDSVQGADGS (86 aa)) constitute an RWP-RK domain. Positions 649–682 (NCPPTSTSPLSNLQDVKIENRDAEDSAGSSTSRA) are disordered. Positions 651–662 (PPTSTSPLSNLQ) are enriched in polar residues. The 83-residue stretch at 741-823 (LVSIKATYRE…NTLRLSVHDV (83 aa)) folds into the PB1 domain.

The protein resides in the nucleus. In terms of biological role, probable transcription factor. This is Protein NLP6 (NLP6) from Arabidopsis thaliana (Mouse-ear cress).